The sequence spans 150 residues: Cytochrome c oxidase subunit 5A, mitochondrial (150 aa).

A mitochondrion-targeting transit peptide spans 1–41; sequence MLGTALRRCAVAAASRAGPRGLQHPAPVPGPTAAIQSIRCY. An SIFI-degron motif is present at residues 2-17; it reads LGTALRRCAVAAASRA. N6-acetyllysine occurs at positions 87 and 113. Threonine 141 bears the Phosphothreonine mark.

Belongs to the cytochrome c oxidase subunit 5A family. Component of the cytochrome c oxidase (complex IV, CIV), a multisubunit enzyme composed of 14 subunits. The complex is composed of a catalytic core of 3 subunits MT-CO1, MT-CO2 and MT-CO3, encoded in the mitochondrial DNA, and 11 supernumerary subunits COX4I, COX5A, COX5B, COX6A, COX6B, COX6C, COX7A, COX7B, COX7C, COX8 and NDUFA4, which are encoded in the nuclear genome. The complex exists as a monomer or a dimer and forms supercomplexes (SCs) in the inner mitochondrial membrane with NADH-ubiquinone oxidoreductase (complex I, CI) and ubiquinol-cytochrome c oxidoreductase (cytochrome b-c1 complex, complex III, CIII), resulting in different assemblies (supercomplex SCI(1)III(2)IV(1) and megacomplex MCI(2)III(2)IV(2)). Interacts with AFG1L. Interacts with RAB5IF. Post-translationally, in response to mitochondrial stress, the precursor protein is ubiquitinated by the SIFI complex in the cytoplasm before mitochondrial import, leading to its degradation. Within the SIFI complex, UBR4 initiates ubiquitin chain that are further elongated or branched by KCMF1.

The protein resides in the mitochondrion inner membrane. It functions in the pathway energy metabolism; oxidative phosphorylation. Its function is as follows. Component of the cytochrome c oxidase, the last enzyme in the mitochondrial electron transport chain which drives oxidative phosphorylation. The respiratory chain contains 3 multisubunit complexes succinate dehydrogenase (complex II, CII), ubiquinol-cytochrome c oxidoreductase (cytochrome b-c1 complex, complex III, CIII) and cytochrome c oxidase (complex IV, CIV), that cooperate to transfer electrons derived from NADH and succinate to molecular oxygen, creating an electrochemical gradient over the inner membrane that drives transmembrane transport and the ATP synthase. Cytochrome c oxidase is the component of the respiratory chain that catalyzes the reduction of oxygen to water. Electrons originating from reduced cytochrome c in the intermembrane space (IMS) are transferred via the dinuclear copper A center (CU(A)) of subunit 2 and heme A of subunit 1 to the active site in subunit 1, a binuclear center (BNC) formed by heme A3 and copper B (CU(B)). The BNC reduces molecular oxygen to 2 water molecules using 4 electrons from cytochrome c in the IMS and 4 protons from the mitochondrial matrix. The protein is Cytochrome c oxidase subunit 5A, mitochondrial (COX5A) of Nycticebus coucang (Slow loris).